Consider the following 30-residue polypeptide: Dermaseptin-S3 (30 aa).

The protein belongs to the frog skin active peptide (FSAP) family. Dermaseptin subfamily. As to quaternary structure, monomer and oligomer. Forms aggregates in aqueous environments. As to expression, expressed by the skin glands.

It localises to the secreted. Its function is as follows. Potent antimicrobial peptide with activity against bacteria and protozoa. Also has activity against fungi. Probably acts by disturbing membrane functions with its amphipathic structure. Binds to healthy erythrocytes (this binding is receptor independent), but has very weak hemolytic activity. Does not bind to P.falciparum infected erythrocytes, but accumulates within the parasite. Kills the parasite, but has no hemolytic activity on the host cell. The sequence is that of Dermaseptin-S3 from Phyllomedusa sauvagei (Sauvage's leaf frog).